Here is a 41-residue protein sequence, read N- to C-terminus: trp operon leader peptide (41 aa).

In terms of biological role, this protein is involved in control of the biosynthesis of tryptophan. The sequence is that of trp operon leader peptide (trpL) from Vibrio parahaemolyticus serotype O3:K6 (strain RIMD 2210633).